Consider the following 398-residue polypeptide: Ornithine aminotransferase (398 aa).

K256 carries the post-translational modification N6-(pyridoxal phosphate)lysine.

The protein belongs to the class-III pyridoxal-phosphate-dependent aminotransferase family. OAT subfamily. The cofactor is pyridoxal 5'-phosphate.

Its subcellular location is the cytoplasm. The enzyme catalyses a 2-oxocarboxylate + L-ornithine = L-glutamate 5-semialdehyde + an L-alpha-amino acid. It functions in the pathway amino-acid biosynthesis; L-proline biosynthesis; L-glutamate 5-semialdehyde from L-ornithine: step 1/1. Functionally, catalyzes the interconversion of ornithine to glutamate semialdehyde. The sequence is that of Ornithine aminotransferase from Oceanobacillus iheyensis (strain DSM 14371 / CIP 107618 / JCM 11309 / KCTC 3954 / HTE831).